Reading from the N-terminus, the 500-residue chain is Neuronal acetylcholine receptor subunit beta-2 (500 aa).

Positions 1 to 24 are cleaved as a signal peptide; that stretch reads MAGHSNSMALFSFSLLWLCSGVLG. At 25–237 the chain is on the extracellular side; sequence TDTEERLVEH…IIRRKPLFYT (213 aa). N-linked (GlcNAc...) asparagine glycans are attached at residues asparagine 50 and asparagine 167. The cysteines at positions 154 and 168 are disulfide-linked. The chain crosses the membrane as a helical span at residues 238 to 258; the sequence is INLIIPCVLITSLAILVFYLP. The Cytoplasmic portion of the chain corresponds to 259-266; sequence SDCGEKMT. Residues 267–287 form a helical membrane-spanning segment; sequence LCISVLLALTVFLLLISKIVP. The Extracellular segment spans residues 288–299; it reads PTSLDVPLVGKY. A helical transmembrane segment spans residues 300–320; it reads LMFTMVLVTFSIVTSVCVLNV. Topologically, residues 321–458 are cytoplasmic; that stretch reads HHRSPTTHTM…WKYVAMVIDR (138 aa). The chain crosses the membrane as a helical span at residues 459-479; it reads LFLWIFVFVCVFGTVGMFLQP.

This sequence belongs to the ligand-gated ion channel (TC 1.A.9) family. Acetylcholine receptor (TC 1.A.9.1) subfamily. Beta-2/CHRNB2 sub-subfamily. Neuronal AChR is a heteropentamer composed of two different types of subunits: alpha and beta. CHRNB2/Beta-2 subunit can be combined to CHRNA2/alpha-2, CHRNA3/alpha-3 or CHRNA4/alpha-4, CHRNA5/alpha-5, CHRNA6/alpha-6 and CHRNB3/beta-3 to give rise to functional receptors. CHRNA2:CHRNB2 and CHRNA4:CHRNB2 nAChR complexes exist in two subtypes: LS (low agonist sensitivity) with a (CHRNA2/4)3:(CHRNB2)2 and HS (high agonist sensitivity) with a (CHRNA2/4)2:(CHRNB2)3 stoichiometry; the subtypes differ in their subunit binding interfaces which are involved in ligand binding. Cells produce predominantly an (CHRNA4)3:(CHRNB2)2 nAChR. The stoichiometric form (CHRNA4)2:(CHRNB2)3 expression is selectively up-regulated by nicotine and has lower single channel conductance and calcium permeability. Also part of the stoichiometric forms: (CHRNA4:CHRNB2)2:CHRNB3 or (CHRNA6:CHRNB2)2:CHRNB3. Can form heteropentamers with CHRNA7, mainly found in basal forebrain cholinergic neurons. Interacts with RIC3; which is required for proper folding and assembly. Interacts with LYPD6. In terms of tissue distribution, expressed in most regions of the CNS.

The protein resides in the synaptic cell membrane. Its subcellular location is the cell membrane. The catalysed reaction is Ca(2+)(in) = Ca(2+)(out). The enzyme catalyses K(+)(in) = K(+)(out). It catalyses the reaction Na(+)(in) = Na(+)(out). Activated by a myriad of ligands such as acetylcholine, cytisine, nicotine, choline and epibatidine. Channel potentiation by calcium is stoichiometry-selective, CHRNA4:CHRNB2 nACh receptor is achieved by calcium association with topographically distinct sites framed by anionic residues within the CHRNA4 subunit and between the CHRNA4 and CHRNB2 subunits. Oligomeric amyloid-beta protein 42 activates specifially CHRNA7:CHRNB2 nAchRs. nAChR activity is inhibited by the antagonist alpha-conotoxins BuIA, PnIA, PnIC, GID and MII, small disulfide-constrained peptides from cone snails. Its function is as follows. Component of neuronal acetylcholine receptors (nAChRs) that function as pentameric, ligand-gated cation channels with high calcium permeability among other activities. nAChRs are excitatory neurotrasnmitter receptors formed by a collection of nAChR subunits known to mediate synaptic transmission in the nervous system and the neuromuscular junction. Each nAchR subunit confers differential attributes to channel properties, including activation, deactivation and desensitization kinetics, pH sensitivity, cation permeability, and binding to allosteric modulators. CHRNB2 forms heteropentameric neuronal acetylcholine receptors with CHRNA2, CHRNA3, CHRNA4 and CHRNA6, as well as CHRNA5 and CHRNB3 as accesory subunits. Found in two major stoichiometric forms,(CHRNA4)3:(CHRNB2)2 and (CHRNA4)2:(CHRNB2)3, the two stoichiometric forms differ in their unitary conductance, calcium permeability, ACh sensitivity and potentiation by divalent cation. Heteropentameric channels with CHRNA6 and CHRNA4 exhibit high sensitivity to ACh and nicotine and are predominantly expressed in only a few brain areas, including dopaminergic neurons, norepirephrine neurons and cells of the visual system. nAChrs containing CHRNA6 subunits mediate endogenous cholinergic modulation of dopamine and gamma-aminobutyric acid (GABA) release in response to nicotine at nerve terminals. Also forms functional nAChRs with other subunits such as CHRNA7:CHRNB2, mainly expressed in basal forebrain cholinergic neurons. This Rattus norvegicus (Rat) protein is Neuronal acetylcholine receptor subunit beta-2 (Chrnb2).